The sequence spans 446 residues: tRNA(Ile2) 2-agmatinylcytidine synthetase TiaS (446 aa).

It belongs to the TiaS family.

It localises to the cytoplasm. It catalyses the reaction cytidine(34) in tRNA(Ile2) + agmatine + ATP + H2O = 2-agmatinylcytidine(34) in tRNA(Ile2) + AMP + 2 phosphate + 2 H(+). Its function is as follows. ATP-dependent agmatine transferase that catalyzes the formation of 2-agmatinylcytidine (agm2C) at the wobble position (C34) of tRNA(Ile2), converting the codon specificity from AUG to AUA. This Cenarchaeum symbiosum (strain A) protein is tRNA(Ile2) 2-agmatinylcytidine synthetase TiaS.